The primary structure comprises 307 residues: 2-haloacid dehalogenase, configuration-inverting (307 aa).

The protein belongs to the HAD-like hydrolase superfamily. S-2-haloalkanoic acid dehalogenase family. As to quaternary structure, homodimer.

The enzyme catalyses an (S)-2-haloacid + H2O = a (2R)-2-hydroxycarboxylate + a halide anion + H(+). The catalysed reaction is an (R)-2-haloacid + H2O = a (2S)-2-hydroxycarboxylate + a halide anion + H(+). Dehalogenates both (S)- and (R)-2-haloalkanoic acids to the corresponding (R)- and (S)-hydroxyalkanoic acids, respectively, with inversion of configuration at C-2. Acts on 2-haloalkanoic acids whose carbon chain lengths are five or less. In Pseudomonas sp. (strain 113), this protein is 2-haloacid dehalogenase, configuration-inverting.